A 793-amino-acid polypeptide reads, in one-letter code: Outer membrane protein assembly factor BamA (793 aa).

Positions 1–19 (MKKLLIASLLFGTTTTVFA) are cleaved as a signal peptide. POTRA domains follow at residues 22–89 (FVAK…VVAK), 90–170 (SIIS…INED), 173–259 (AKLA…VNEG), 262–341 (YDLR…VDAG), and 344–418 (LTVR…VKER).

Belongs to the BamA family. Part of the Bam complex.

It is found in the cell outer membrane. Functionally, part of the outer membrane protein assembly complex, which is involved in assembly and insertion of beta-barrel proteins into the outer membrane. The protein is Outer membrane protein assembly factor BamA of Haemophilus influenzae.